Here is a 307-residue protein sequence, read N- to C-terminus: MALKQEMAKSLLKTASLSGRTKLLHQTGLSLYSTSHGFYEEEVKKTLQQFPGGSIDLQKEDNGIGILTLNNPSRMNAFSGVMMLQLLEKVIELENWTEGKGLIVRGAKNTFSSGSDLNAVKSLGTPEDGMAVCMFMQNTLTRFMRLPLISVALVQGWALGGGAEFTTACDFRLMTPESKIRFVHKEMGIIPSWGGTTRLVEIIGSRQALKVLSGALKLDSKNALNIGMVEEVLQSSDETKSLEEAQEWLKQFIQGPPEVIRALKKSVCSGRELYLEEALQNERDLLGTVWGGPANLEAIAKKGKFNK.

Ala2 is modified (N-acetylalanine). Lys217 is subject to N6-acetyllysine; alternate. Lys217 bears the N6-succinyllysine; alternate mark. An N6-succinyllysine modification is found at Lys301.

This sequence belongs to the enoyl-CoA hydratase/isomerase family.

Its subcellular location is the cytoplasm. It localises to the cytosol. The enzyme catalyses (2S)-ethylmalonyl-CoA + H(+) = butanoyl-CoA + CO2. It catalyses the reaction (S)-methylmalonyl-CoA + H(+) = propanoyl-CoA + CO2. The catalysed reaction is (2R)-ethylmalonyl-CoA + H(+) = butanoyl-CoA + CO2. Its function is as follows. Decarboxylates ethylmalonyl-CoA, a potentially toxic metabolite, to form butyryl-CoA, suggesting it might be involved in metabolite proofreading. Acts preferentially on (S)-ethylmalonyl-CoA but also has some activity on the (R)-isomer. Also has methylmalonyl-CoA decarboxylase activity at lower level. The polypeptide is Ethylmalonyl-CoA decarboxylase (ECHDC1) (Homo sapiens (Human)).